A 353-amino-acid chain; its full sequence is Photosystem II protein D1 (353 aa).

Thr2 carries the post-translational modification N-acetylthreonine. At Thr2 the chain carries Phosphothreonine. 3 helical membrane passes run 29 to 46 (YIGWFGVLMIPTLLTATS), 118 to 133 (HFLLGVACYMGREWEL), and 142 to 156 (WIAVAYSAPVAAATA). Position 118 (His118) interacts with chlorophyll a. Residue Tyr126 coordinates pheophytin a. [CaMn4O5] cluster contacts are provided by Asp170 and Glu189. A helical transmembrane segment spans residues 197-218 (FHMLGVAGVFGGSLFSAMHGSL). His198 contributes to the chlorophyll a binding site. A quinone contacts are provided by residues His215 and 264-265 (SF). Fe cation is bound at residue His215. A Fe cation-binding site is contributed by His272. Residues 274-288 (FLAAWPVVGIWFTAL) form a helical membrane-spanning segment. Residues His332, Glu333, Asp342, and Ala344 each contribute to the [CaMn4O5] cluster site. Positions 345–353 (SIEAPLVNG) are excised as a propeptide.

It belongs to the reaction center PufL/M/PsbA/D family. In terms of assembly, PSII is composed of 1 copy each of membrane proteins PsbA, PsbB, PsbC, PsbD, PsbE, PsbF, PsbH, PsbI, PsbJ, PsbK, PsbL, PsbM, PsbT, PsbX, PsbY, PsbZ, Psb30/Ycf12, at least 3 peripheral proteins of the oxygen-evolving complex and a large number of cofactors. It forms dimeric complexes. The D1/D2 heterodimer binds P680, chlorophylls that are the primary electron donor of PSII, and subsequent electron acceptors. It shares a non-heme iron and each subunit binds pheophytin, quinone, additional chlorophylls, carotenoids and lipids. D1 provides most of the ligands for the Mn4-Ca-O5 cluster of the oxygen-evolving complex (OEC). There is also a Cl(-1) ion associated with D1 and D2, which is required for oxygen evolution. The PSII complex binds additional chlorophylls, carotenoids and specific lipids. is required as a cofactor. Tyr-161 forms a radical intermediate that is referred to as redox-active TyrZ, YZ or Y-Z. Post-translationally, C-terminally processed by CTPA; processing is essential to allow assembly of the oxygen-evolving complex and thus photosynthetic growth.

The protein localises to the plastid. The protein resides in the chloroplast thylakoid membrane. The catalysed reaction is 2 a plastoquinone + 4 hnu + 2 H2O = 2 a plastoquinol + O2. Photosystem II (PSII) is a light-driven water:plastoquinone oxidoreductase that uses light energy to abstract electrons from H(2)O, generating O(2) and a proton gradient subsequently used for ATP formation. It consists of a core antenna complex that captures photons, and an electron transfer chain that converts photonic excitation into a charge separation. The D1/D2 (PsbA/PsbD) reaction center heterodimer binds P680, the primary electron donor of PSII as well as several subsequent electron acceptors. The polypeptide is Photosystem II protein D1 (Psilotum nudum (Whisk fern)).